The chain runs to 131 residues: D-ribose pyranase (131 aa).

Residue His20 is the Proton donor of the active site. Substrate is bound by residues Asp28, His98, and 120 to 122 (YSN).

It belongs to the RbsD / FucU family. RbsD subfamily. As to quaternary structure, homodecamer.

It is found in the cytoplasm. The enzyme catalyses beta-D-ribopyranose = beta-D-ribofuranose. Its pathway is carbohydrate metabolism; D-ribose degradation; D-ribose 5-phosphate from beta-D-ribopyranose: step 1/2. Catalyzes the interconversion of beta-pyran and beta-furan forms of D-ribose. The polypeptide is D-ribose pyranase (Limosilactobacillus reuteri (strain DSM 20016) (Lactobacillus reuteri)).